A 62-amino-acid polypeptide reads, in one-letter code: Beta-defensin 37 (62 aa).

The first 16 residues, 1–16 (MKFSYFLLLLLSLSNF), serve as a signal peptide directing secretion. Intrachain disulfides connect cysteine 29/cysteine 58, cysteine 36/cysteine 51, and cysteine 41/cysteine 59.

The protein belongs to the beta-defensin family. Only expressed in epididymis (corpus and cauda).

The protein localises to the secreted. Has antibacterial activity. This Mus musculus (Mouse) protein is Beta-defensin 37 (Defb37).